A 507-amino-acid chain; its full sequence is ATP synthase subunit alpha, chloroplastic (507 aa).

An ATP-binding site is contributed by 170–177 (GDRQTGKT).

Belongs to the ATPase alpha/beta chains family. F-type ATPases have 2 components, CF(1) - the catalytic core - and CF(0) - the membrane proton channel. CF(1) has five subunits: alpha(3), beta(3), gamma(1), delta(1), epsilon(1). CF(0) has four main subunits: a, b, b' and c.

The protein resides in the plastid. It localises to the chloroplast thylakoid membrane. It catalyses the reaction ATP + H2O + 4 H(+)(in) = ADP + phosphate + 5 H(+)(out). Its function is as follows. Produces ATP from ADP in the presence of a proton gradient across the membrane. The alpha chain is a regulatory subunit. The protein is ATP synthase subunit alpha, chloroplastic of Oenothera glazioviana (Large-flowered evening primrose).